The chain runs to 147 residues: Hemoglobin subunit gamma-2 (147 aa).

Residues 3–147 (HFTEEDKATI…VASALSSRYH (145 aa)) form the Globin domain. A Phosphothreonine modification is found at Thr-13. Phosphoserine occurs at positions 45, 51, and 53. Residue Lys-60 is modified to N6-acetyllysine. Heme b is bound at residue His-64. Lys-83 carries the N6-acetyllysine modification. His-93 serves as a coordination point for heme b. S-nitrosocysteine is present on Cys-94. Residues Ser-140, Ser-143, and Ser-144 each carry the phosphoserine modification.

The protein belongs to the globin family. Heterotetramer of two alpha chains and two gamma chains in fetal hemoglobin (Hb F). Red blood cells.

In terms of biological role, gamma chains make up the fetal hemoglobin F, in combination with alpha chains. This chain is Hemoglobin subunit gamma-2 (HBG2), found in Pongo pygmaeus (Bornean orangutan).